Consider the following 297-residue polypeptide: MTGEDFKIKSGLAQMLKGGVIMDVVTPEQAKIAEKSGACAVMALESIPADMRKSGKVCRMSDPKMIKDIMNSVSIPVMAKVRIGHFVEAQIIEALEVDYIDESEVLTPADWTHHIEKDKFKVPFVCGAKDLGEALRRINEGAAMIRTKGEAGTGDVSEAVKHIRRITEEIKACQQLKSEDDIAKVAEEMRVPVSLLKDVLEKGKLPVVNFAAGGVATPADAALLMQLGCDGVFVGSGIFKSSNPVRLATAVVEATTHFDNPSKLLEVSSDLGELMGGVSIESISHASNGVRLSEIGW.

Asp-23 is a D-ribose 5-phosphate binding site. The Schiff-base intermediate with D-ribose 5-phosphate role is filled by Lys-80. Gly-152 lines the D-ribose 5-phosphate pocket. Arg-164 contacts D-glyceraldehyde 3-phosphate. Residues Gly-214 and 235–236 (GS) each bind D-ribose 5-phosphate.

The protein belongs to the PdxS/SNZ family. Homohexamer. Interacts with AIM18.

The catalysed reaction is aldehydo-D-ribose 5-phosphate + D-glyceraldehyde 3-phosphate + L-glutamine = pyridoxal 5'-phosphate + L-glutamate + phosphate + 3 H2O + H(+). Its pathway is cofactor biosynthesis; pyridoxal 5'-phosphate biosynthesis. Functionally, catalyzes the formation of pyridoxal 5'-phosphate from ribose 5-phosphate (RBP), glyceraldehyde 3-phosphate (G3P) and ammonia. The ammonia is provided by a SNO isoform. Can also use ribulose 5-phosphate and dihydroxyacetone phosphate as substrates, resulting from enzyme-catalyzed isomerization of RBP and G3P, respectively. The sequence is that of Pyridoxal 5'-phosphate synthase subunit SNZ1 (SNZ1) from Saccharomyces cerevisiae (strain ATCC 204508 / S288c) (Baker's yeast).